A 131-amino-acid chain; its full sequence is Phosphoribosyl-AMP cyclohydrolase (131 aa).

Asp78 lines the Mg(2+) pocket. Residue Cys79 participates in Zn(2+) binding. 2 residues coordinate Mg(2+): Asp80 and Asp82. Residues Cys96 and Cys103 each contribute to the Zn(2+) site.

This sequence belongs to the PRA-CH family. As to quaternary structure, homodimer. The cofactor is Mg(2+). Zn(2+) serves as cofactor.

The protein resides in the cytoplasm. It catalyses the reaction 1-(5-phospho-beta-D-ribosyl)-5'-AMP + H2O = 1-(5-phospho-beta-D-ribosyl)-5-[(5-phospho-beta-D-ribosylamino)methylideneamino]imidazole-4-carboxamide. It functions in the pathway amino-acid biosynthesis; L-histidine biosynthesis; L-histidine from 5-phospho-alpha-D-ribose 1-diphosphate: step 3/9. Catalyzes the hydrolysis of the adenine ring of phosphoribosyl-AMP. The chain is Phosphoribosyl-AMP cyclohydrolase from Neisseria meningitidis serogroup C / serotype 2a (strain ATCC 700532 / DSM 15464 / FAM18).